A 245-amino-acid polypeptide reads, in one-letter code: Ribonuclease 3 (245 aa).

Residues 17–146 form the RNase III domain; the sequence is FTDKMKSLGL…FVGALYLDQG (130 aa). E59 provides a ligand contact to Mg(2+). D63 is an active-site residue. 2 residues coordinate Mg(2+): D132 and E135. Residue E135 is part of the active site. Residues 172–241 form the DRBM domain; the sequence is DFKTQFQEYV…AEQAYKLMKN (70 aa).

This sequence belongs to the ribonuclease III family. As to quaternary structure, homodimer. It depends on Mg(2+) as a cofactor.

It localises to the cytoplasm. The catalysed reaction is Endonucleolytic cleavage to 5'-phosphomonoester.. In terms of biological role, digests double-stranded RNA. Involved in the processing of primary rRNA transcript to yield the immediate precursors to the large and small rRNAs (23S and 16S). Processes some mRNAs, and tRNAs when they are encoded in the rRNA operon. Processes pre-crRNA and tracrRNA of type II CRISPR loci if present in the organism. The protein is Ribonuclease 3 of Staphylococcus epidermidis (strain ATCC 12228 / FDA PCI 1200).